We begin with the raw amino-acid sequence, 344 residues long: MDIFREIASSMKGKNVFISPASISSVLTILYYGANGSTAEQLSKYVEKEENMDKVSAQNISFKSMNKVYGRYSAVFKDSFLGKIGDKFQTVDFTDCRTIDAINKCVDIFTEGKINPLLDEPLSPDTCLLAISAVYFKAKWLMPFEKEFTSDYPFYVSPTEMVDVSMMSIYGEPFNHASVKESFGNFSIIELPYVGDTSMMVILPNKIDGLESIEQNLTDTNFKKWCNSLKATFIDVHIPKFKVIGSYNLVDTLIKLGLTDVFYSTGDYINMCNSDVSVDAMIHKTYIDVNEEYTEAAAATSVLVADCASTVTNEFCADHPFIYVIRHVDGKILFVGRYCSPTTN.

The protein belongs to the serpin family. Poxviruses subfamily.

Its subcellular location is the host cytoplasm. Viral serpin that inhibits both cysteine and serine proteinases involved in the regulation of host inflammatory and apoptosis processes. Major anti-apoptotic protein which inhibits both intrinsic and extrinsic pathways and strongly cleaves host CASP1 and CASP8 but is a rather poor inhibitor of host CASP3. Prevents the proteolytic activity of host interleukin-1-beta converting enzyme (ICE) and ICE-like enzymes. Can also block apoptosis through host tumor necrosis factor (TNF) receptor. The inhibition of host ICE is an example of a 'cross-class' interaction, in which a serpin inhibits a non-serine proteinase. Also inhibits granzyme B. This chain is Serine proteinase inhibitor 2 (OPG199), found in Cynomys gunnisoni (Gunnison's prairie dog).